The chain runs to 206 residues: GTP cyclohydrolase 1 (206 aa).

Zn(2+) contacts are provided by Cys-95, His-98, and Cys-166.

The protein belongs to the GTP cyclohydrolase I family. As to quaternary structure, toroid-shaped homodecamer, composed of two pentamers of five dimers.

It catalyses the reaction GTP + H2O = 7,8-dihydroneopterin 3'-triphosphate + formate + H(+). It participates in cofactor biosynthesis; 7,8-dihydroneopterin triphosphate biosynthesis; 7,8-dihydroneopterin triphosphate from GTP: step 1/1. This Bartonella bacilliformis (strain ATCC 35685 / KC583 / Herrer 020/F12,63) protein is GTP cyclohydrolase 1.